Here is a 329-residue protein sequence, read N- to C-terminus: D-alanine--D-alanine ligase (329 aa).

One can recognise an ATP-grasp domain in the interval 120 to 326; that stretch reads KLWYDAIGIP…FHEFLADCIN (207 aa). Residue 150–205 coordinates ATP; sequence AFDKWGKVFVKAARQGSSVGCYSVTNKQSVSQAVNDAFGYSEQVLVEKSVKPRELE. The Mg(2+) site is built by aspartate 280, glutamate 293, and asparagine 295.

Belongs to the D-alanine--D-alanine ligase family. It depends on Mg(2+) as a cofactor. Mn(2+) is required as a cofactor.

It is found in the cytoplasm. The enzyme catalyses 2 D-alanine + ATP = D-alanyl-D-alanine + ADP + phosphate + H(+). Its pathway is cell wall biogenesis; peptidoglycan biosynthesis. Cell wall formation. The polypeptide is D-alanine--D-alanine ligase (Vibrio campbellii (strain ATCC BAA-1116)).